We begin with the raw amino-acid sequence, 523 residues long: DNA primase (523 aa).

The CHC2-type zinc-finger motif lies at 37-61; the sequence is CPFHAEKTPSFFVNPLQGYFYCFGC. A Toprim domain is found at 259 to 340; it reads KSVILVEGYI…NVSVVRMDFG (82 aa). Residues glutamate 265, aspartate 309, and aspartate 311 each contribute to the Mg(2+) site.

The protein belongs to the DnaG primase family. As to quaternary structure, monomer. Interacts with DnaB. Zn(2+) serves as cofactor. It depends on Mg(2+) as a cofactor.

It carries out the reaction ssDNA + n NTP = ssDNA/pppN(pN)n-1 hybrid + (n-1) diphosphate.. Its function is as follows. RNA polymerase that catalyzes the synthesis of short RNA molecules used as primers for DNA polymerase during DNA replication. This Borreliella burgdorferi (strain ATCC 35210 / DSM 4680 / CIP 102532 / B31) (Borrelia burgdorferi) protein is DNA primase.